The primary structure comprises 498 residues: ADP,ATP carrier protein 1 (498 aa).

Residues 1–33 (MSTSKSENYLSELRKIIWPIEQHENKKFLPLAF) lie on the Cytoplasmic side of the membrane. A helical transmembrane segment spans residues 34–54 (MMFCILLNYSTLRSIKDGFVV). C37 and C85 are joined by a disulfide. Topologically, residues 55–67 (TDIGTESISFLKT) are extracellular. Residues 68-88 (YIVLPSAVIAMVIYVKLCDIL) form a helical membrane-spanning segment. Over 89-92 (KQEN) the chain is Cytoplasmic. The chain crosses the membrane as a helical span at residues 93–113 (IFYVITSFFLGYFALFAFVLY). Topologically, residues 114 to 147 (PYPDLVHPDHKTIESLSLAYPNFKWFIKIVGKWS) are extracellular. Residues 148 to 168 (FASFYTIAELWGTMMLSLLFW) form a helical membrane-spanning segment. The Cytoplasmic segment spans residues 169–184 (QFANQITKITEAKRFY). Residues 185–205 (SMFGLLANLALPVTSVVIGYF) traverse the membrane as a helical segment. Residues 206–218 (LHEKTQIVSEHLK) are Extracellular-facing. Residues 219–239 (FIPLFVIMITSSFLIILTYRW) form a helical membrane-spanning segment. Topologically, residues 240-279 (MNKNVLTDPRLYDPTLVKEKKAKAKLSFIESFKMIFTSKY) are cytoplasmic. Residues 280–300 (VGYIALLIIAYGVSVNLVEGV) form a helical membrane-spanning segment. Residues 301 to 320 (WKSKVKELYPTKEAYTIYMG) are Extracellular-facing. The chain crosses the membrane as a helical span at residues 321–341 (QFQFYQGWVAIAFMLIGSNIL). Topologically, residues 342-348 (RKVSWLT) are cytoplasmic. A helical membrane pass occupies residues 349–369 (AAMITPLMMFITGAAFFSFIF). At 370-379 (FDSVIAMNLT) the chain is on the extracellular side. Residues 380–400 (GILASSPLTLAVMFGMIQNVL) form a helical membrane-spanning segment. The Cytoplasmic segment spans residues 401–438 (SKGVKYSLFDATKNMAYIPLDKDLRVKGQAAVEVIGGR). Position 436-442 (436-442 (GGRLGKS)) interacts with ATP. A helical membrane pass occupies residues 439 to 459 (LGKSGGAIIQSTFFILFPAFG). Residues 460–465 (FIEATP) are Extracellular-facing. A helical membrane pass occupies residues 466–486 (YFASIFFIIVILWIFAVKGLN). Over 487–498 (KEYQVLVNKNEN) the chain is Cytoplasmic.

Belongs to the ADP/ATP translocase tlc family.

The protein resides in the cell membrane. Provides the rickettsial cell with host ATP in exchange for rickettsial ADP. This is an obligate exchange system. This energy acquiring activity is an important component of rickettsial parasitism. This is ADP,ATP carrier protein 1 (tlcA) from Rickettsia typhi (strain ATCC VR-144 / Wilmington).